Here is a 403-residue protein sequence, read N- to C-terminus: Vacuole membrane protein 1 homolog (403 aa).

Residues 7–33 are a coiled coil; that stretch reads IVLSNEKDIQLRIQQLEERKEKRKNVK. A run of 8 helical transmembrane segments spans residues 65–85, 102–122, 150–170, 175–195, 240–260, 263–283, 294–314, and 348–368; these read FLLF…YVPG, IWWV…LHTF, ANSF…WMIL, WAAL…YFVA, LIGN…NPLF, AGIT…ATFI, ACFV…SFIE, and VGLA…MSIV.

It belongs to the VMP1 family.

The protein resides in the membrane. It localises to the endoplasmic reticulum. The enzyme catalyses a 1,2-diacyl-sn-glycero-3-phospho-L-serine(in) = a 1,2-diacyl-sn-glycero-3-phospho-L-serine(out). It catalyses the reaction cholesterol(in) = cholesterol(out). The catalysed reaction is a 1,2-diacyl-sn-glycero-3-phosphocholine(in) = a 1,2-diacyl-sn-glycero-3-phosphocholine(out). It carries out the reaction a 1,2-diacyl-sn-glycero-3-phosphoethanolamine(in) = a 1,2-diacyl-sn-glycero-3-phosphoethanolamine(out). Phospholipid scramblase involved in lipid homeostasis and membrane dynamics processes. Required for autophagosome formation: participates in early stages of autophagosome biogenesis at the endoplasmic reticulum (ER) membrane by reequilibrating the leaflets of the ER as lipids are extracted. In addition to autophagy, involved in other processes in which phospholipid scramblase activity is required. This is Vacuole membrane protein 1 homolog from Dictyostelium discoideum (Social amoeba).